A 376-amino-acid polypeptide reads, in one-letter code: Copper-containing nitrite reductase (376 aa).

The tat-type signal signal peptide spans 1–33; it reads MAEQMQISRRTILAGAALAGALAPVLATTSAWG. A Pyrrolidone carboxylic acid modification is found at Gln34. Plastocyanin-like domains are found at residues 34 to 211 and 212 to 376; these read QGAV…YDKI and YYVG…PSGT. Cu cation-binding residues include His131, His136, His171, Cys172, His181, Met186, and His342.

It belongs to the multicopper oxidase family. Homotrimer. The cofactor is Cu(2+). It depends on Cu(+) as a cofactor. FAD is required as a cofactor. In terms of processing, predicted to be exported by the Tat system. The position of the signal peptide cleavage has been experimentally proven.

It is found in the periplasm. The enzyme catalyses nitric oxide + Fe(III)-[cytochrome c] + H2O = Fe(II)-[cytochrome c] + nitrite + 2 H(+). The protein operates within nitrogen metabolism; nitrate reduction (denitrification); dinitrogen from nitrate: step 2/4. The chain is Copper-containing nitrite reductase (nirK) from Alcaligenes faecalis.